The chain runs to 378 residues: Glutamate 5-kinase (378 aa).

Residue Lys15 coordinates ATP. Positions 56, 143, and 155 each coordinate substrate. 175-176 provides a ligand contact to ATP; the sequence is SD. The PUA domain occupies 281–358; the sequence is KGTLTIDAGA…PDVAVILGIS (78 aa).

Belongs to the glutamate 5-kinase family.

The protein localises to the cytoplasm. The enzyme catalyses L-glutamate + ATP = L-glutamyl 5-phosphate + ADP. It functions in the pathway amino-acid biosynthesis; L-proline biosynthesis; L-glutamate 5-semialdehyde from L-glutamate: step 1/2. Its function is as follows. Catalyzes the transfer of a phosphate group to glutamate to form L-glutamate 5-phosphate. This is Glutamate 5-kinase from Bradyrhizobium sp. (strain BTAi1 / ATCC BAA-1182).